An 83-amino-acid chain; its full sequence is Phosphoribosylformylglycinamidine synthase subunit PurS (83 aa).

This sequence belongs to the PurS family. As to quaternary structure, homodimer. Part of the FGAM synthase complex composed of 1 PurL, 1 PurQ and 2 PurS subunits.

The protein resides in the cytoplasm. It carries out the reaction N(2)-formyl-N(1)-(5-phospho-beta-D-ribosyl)glycinamide + L-glutamine + ATP + H2O = 2-formamido-N(1)-(5-O-phospho-beta-D-ribosyl)acetamidine + L-glutamate + ADP + phosphate + H(+). It participates in purine metabolism; IMP biosynthesis via de novo pathway; 5-amino-1-(5-phospho-D-ribosyl)imidazole from N(2)-formyl-N(1)-(5-phospho-D-ribosyl)glycinamide: step 1/2. In terms of biological role, part of the phosphoribosylformylglycinamidine synthase complex involved in the purines biosynthetic pathway. Catalyzes the ATP-dependent conversion of formylglycinamide ribonucleotide (FGAR) and glutamine to yield formylglycinamidine ribonucleotide (FGAM) and glutamate. The FGAM synthase complex is composed of three subunits. PurQ produces an ammonia molecule by converting glutamine to glutamate. PurL transfers the ammonia molecule to FGAR to form FGAM in an ATP-dependent manner. PurS interacts with PurQ and PurL and is thought to assist in the transfer of the ammonia molecule from PurQ to PurL. The chain is Phosphoribosylformylglycinamidine synthase subunit PurS from Methanocaldococcus jannaschii (strain ATCC 43067 / DSM 2661 / JAL-1 / JCM 10045 / NBRC 100440) (Methanococcus jannaschii).